Here is a 264-residue protein sequence, read N- to C-terminus: Meiotically up-regulated gene 162 protein (264 aa).

The next 7 membrane-spanning stretches (helical) occupy residues 18 to 38, 54 to 74, 84 to 104, 140 to 160, 174 to 194, 199 to 219, and 223 to 243; these read IVIFFDILIILLGYIGTWNLK, LWIYIRGTVLCADCIFTAGSA, VFQVSSLMFYGLMMEFFGYSF, IISIIEIPIKLHFILNVLLFL, HLSYHLFALWVINLYIWIKLI, FVLGFLAGLSVLLLNTGSLIT, and LISYFNLLTSCLIIFPSIWIY.

The protein resides in the endoplasmic reticulum membrane. Has a role in meiosis. The chain is Meiotically up-regulated gene 162 protein (mug162) from Schizosaccharomyces pombe (strain 972 / ATCC 24843) (Fission yeast).